The sequence spans 405 residues: Phosphopentomutase (405 aa).

The Mn(2+) site is built by D10, D303, H308, D344, H345, and H356.

It belongs to the phosphopentomutase family. It depends on Mn(2+) as a cofactor.

It is found in the cytoplasm. The enzyme catalyses 2-deoxy-alpha-D-ribose 1-phosphate = 2-deoxy-D-ribose 5-phosphate. It carries out the reaction alpha-D-ribose 1-phosphate = D-ribose 5-phosphate. The protein operates within carbohydrate degradation; 2-deoxy-D-ribose 1-phosphate degradation; D-glyceraldehyde 3-phosphate and acetaldehyde from 2-deoxy-alpha-D-ribose 1-phosphate: step 1/2. Its function is as follows. Isomerase that catalyzes the conversion of deoxy-ribose 1-phosphate (dRib-1-P) and ribose 1-phosphate (Rib-1-P) to deoxy-ribose 5-phosphate (dRib-5-P) and ribose 5-phosphate (Rib-5-P), respectively. The protein is Phosphopentomutase of Shewanella sediminis (strain HAW-EB3).